The sequence spans 210 residues: Thymidylate kinase (210 aa).

ATP is bound at residue 9 to 16; it reads GLEGAGKS.

The protein belongs to the thymidylate kinase family.

The catalysed reaction is dTMP + ATP = dTDP + ADP. Its function is as follows. Phosphorylation of dTMP to form dTDP in both de novo and salvage pathways of dTTP synthesis. This is Thymidylate kinase from Aliivibrio fischeri (strain MJ11) (Vibrio fischeri).